The chain runs to 327 residues: Phosphate acyltransferase (327 aa).

It belongs to the PlsX family. As to quaternary structure, homodimer. Probably interacts with PlsY.

Its subcellular location is the cytoplasm. The catalysed reaction is a fatty acyl-[ACP] + phosphate = an acyl phosphate + holo-[ACP]. The protein operates within lipid metabolism; phospholipid metabolism. Functionally, catalyzes the reversible formation of acyl-phosphate (acyl-PO(4)) from acyl-[acyl-carrier-protein] (acyl-ACP). This enzyme utilizes acyl-ACP as fatty acyl donor, but not acyl-CoA. The polypeptide is Phosphate acyltransferase (Thermotoga neapolitana (strain ATCC 49049 / DSM 4359 / NBRC 107923 / NS-E)).